We begin with the raw amino-acid sequence, 641 residues long: Single-strand DNA endonuclease 1 (641 aa).

The interval 1 to 90 (MGVKNLWDIL…SLKLATYRRR (90 aa)) is N-domain. The XPG-N domain stretch occupies residues 2-97 (GVKNLWDILE…RRRLGSISHA (96 aa)). Residues Asp-30, Asp-76, Glu-144, Glu-146, Asp-165, Asp-167, and Asp-217 each coordinate Mg(2+). An XPG-I domain region spans residues 132–217 (MALGIPCLDG…ISLAVLLGSD (86 aa)). 2 I-domain regions span residues 132-220 (MALG…DYSN) and 132-221 (MALG…YSNG). Residues 217-350 (DYSNGVNGFG…ILPKIAEREL (134 aa)) form a 5'-3' exonuclease domain region. Disordered regions lie at residues 428-448 (KGEE…QAAV) and 572-615 (VGSH…RVHH). The span at 580–590 (DGGGGGGGGVA) shows a compositional bias: gly residues.

The protein belongs to the XPG/RAD2 endonuclease family. GEN subfamily. Mg(2+) is required as a cofactor. Highly expressed in shoot apical meristem (SAM) and young leaves. Expressed in roots, flag leaf and panicles.

The protein resides in the nucleus. Its function is as follows. Single-stranded DNA endonuclease activity in vitro. May not be active as double-stranded DNA endonuclease. Endonuclease which cleaves flap structures at the junction between single-stranded DNA and double-stranded DNA with a specific cleavage site in the 5' overhang strand exactly one nucleotide 3' of the branch point. Structure- and sequence-specific nuclease that resolves holliday junctions (HJs) by symmetrically oriented incisions in two opposing strands near the junction point, thus leading to ligatable products; HJs are physical links between homologous DNA molecules that arise as central intermediary structures during homologous recombination and repair in meiotic and somatic cells. Probably involved in the resolution of toxic replication structures to ensure genome stability, and to maintain telomere integrity and replication. The polypeptide is Single-strand DNA endonuclease 1 (Oryza sativa subsp. japonica (Rice)).